A 233-amino-acid polypeptide reads, in one-letter code: 2-C-methyl-D-erythritol 4-phosphate cytidylyltransferase (233 aa).

This sequence belongs to the IspD/TarI cytidylyltransferase family. IspD subfamily.

It carries out the reaction 2-C-methyl-D-erythritol 4-phosphate + CTP + H(+) = 4-CDP-2-C-methyl-D-erythritol + diphosphate. It functions in the pathway isoprenoid biosynthesis; isopentenyl diphosphate biosynthesis via DXP pathway; isopentenyl diphosphate from 1-deoxy-D-xylulose 5-phosphate: step 2/6. In terms of biological role, catalyzes the formation of 4-diphosphocytidyl-2-C-methyl-D-erythritol from CTP and 2-C-methyl-D-erythritol 4-phosphate (MEP). This is 2-C-methyl-D-erythritol 4-phosphate cytidylyltransferase from Vibrio atlanticus (strain LGP32) (Vibrio splendidus (strain Mel32)).